A 411-amino-acid chain; its full sequence is LL-diaminopimelate aminotransferase (411 aa).

Substrate contacts are provided by Tyr-15 and Gly-42. Pyridoxal 5'-phosphate contacts are provided by residues Tyr-72, 105-106 (SK), Tyr-129, Asn-186, Tyr-217, and 245-247 (SFS). 3 residues coordinate substrate: Lys-106, Tyr-129, and Asn-186. Residue Lys-248 is modified to N6-(pyridoxal phosphate)lysine. The pyridoxal 5'-phosphate site is built by Arg-256 and Asn-287. Asn-287 and Arg-382 together coordinate substrate.

The protein belongs to the class-I pyridoxal-phosphate-dependent aminotransferase family. LL-diaminopimelate aminotransferase subfamily. Homodimer. The cofactor is pyridoxal 5'-phosphate.

It catalyses the reaction (2S,6S)-2,6-diaminopimelate + 2-oxoglutarate = (S)-2,3,4,5-tetrahydrodipicolinate + L-glutamate + H2O + H(+). It participates in amino-acid biosynthesis; L-lysine biosynthesis via DAP pathway; LL-2,6-diaminopimelate from (S)-tetrahydrodipicolinate (aminotransferase route): step 1/1. Its function is as follows. Involved in the synthesis of meso-diaminopimelate (m-DAP or DL-DAP), required for both lysine and peptidoglycan biosynthesis. Catalyzes the direct conversion of tetrahydrodipicolinate to LL-diaminopimelate. Is also able to use meso-diaminopimelate, lysine or ornithine as substrates. This Protochlamydia amoebophila (strain UWE25) protein is LL-diaminopimelate aminotransferase.